The primary structure comprises 620 residues: Glutathione-regulated potassium-efflux system protein KefC (620 aa).

12 consecutive transmembrane segments (helical) span residues 4 to 24 (HTLL…PIAV), 26 to 46 (LGLG…PWGL), 54 to 74 (SILH…GLEL), 90 to 110 (GALQ…FLGL), 114 to 134 (VAEL…MQAM), 149 to 169 (FAVL…IPLL), 178 to 198 (LGAF…VVLL), 218 to 238 (VFSA…EEVG), 270 to 290 (GLLL…GTLV), 294 to 314 (LRIL…LWLV), 327 to 347 (WFAV…GAAQ), and 359 to 379 (ALTL…VLLT). Positions 399 to 518 (QPRVIVAGFG…AGVAMPERET (120 aa)) constitute an RCK N-terminal domain. The segment at 599–620 (QGTAEGKHSGEAADEPEVKPSI) is disordered.

This sequence belongs to the monovalent cation:proton antiporter 2 (CPA2) transporter (TC 2.A.37) family. KefC subfamily. In terms of assembly, homodimer. Interacts with the regulatory subunit KefF.

The protein localises to the cell inner membrane. Functionally, pore-forming subunit of a potassium efflux system that confers protection against electrophiles. Catalyzes K(+)/H(+) antiport. This chain is Glutathione-regulated potassium-efflux system protein KefC, found in Salmonella schwarzengrund (strain CVM19633).